The primary structure comprises 321 residues: Cytochrome c biogenesis protein CcsA (321 aa).

8 helical membrane-spanning segments follow: residues 1–21 (MIFITLEHILAHISFSLISVV), 36–56 (LSSSGGKGMIVTFVCTTGLLI), 70–90 (LYESFMFLSWSSSVIHIILEV), 97–117 (GLGAITAPSTMLTHGFATSGL), 143–163 (ILLSYATLLCGSLSSIAFLII), 229–249 (VIGLGFLLLTIGILSGAVWAN), 256–276 (WSWDPKETWALITWIIFAIYL), and 290–310 (AIIASLGSFIVWICYLGVDLL).

It belongs to the CcmF/CycK/Ccl1/NrfE/CcsA family. May interact with Ccs1.

It localises to the plastid. The protein resides in the chloroplast thylakoid membrane. Functionally, required during biogenesis of c-type cytochromes (cytochrome c6 and cytochrome f) at the step of heme attachment. The chain is Cytochrome c biogenesis protein CcsA from Cycas taitungensis (Prince sago).